We begin with the raw amino-acid sequence, 337 residues long: Glyceraldehyde-3-phosphate dehydrogenase (337 aa).

NAD(+)-binding positions include 12-13 (RI), D34, and K79. D-glyceraldehyde 3-phosphate contacts are provided by residues 150–152 (SCT), T181, 210–211 (TG), and R233. The Nucleophile role is filled by C151. N315 provides a ligand contact to NAD(+).

This sequence belongs to the glyceraldehyde-3-phosphate dehydrogenase family. Homotetramer.

The protein localises to the cytoplasm. It catalyses the reaction D-glyceraldehyde 3-phosphate + phosphate + NAD(+) = (2R)-3-phospho-glyceroyl phosphate + NADH + H(+). It functions in the pathway carbohydrate degradation; glycolysis; pyruvate from D-glyceraldehyde 3-phosphate: step 1/5. This chain is Glyceraldehyde-3-phosphate dehydrogenase (GPD), found in Cochliobolus lunatus (Filamentous fungus).